Consider the following 272-residue polypeptide: Cytosolic Fe-S cluster assembly factor NUBP2 (272 aa).

23-30 contributes to the ATP binding site; that stretch reads GKGGVGKS. [4Fe-4S] cluster is bound by residues C197 and C200.

This sequence belongs to the Mrp/NBP35 ATP-binding proteins family. NUBP2/CFD1 subfamily. In terms of assembly, heterotetramer of 2 NUBP1 and 2 NUBP2 chains. [4Fe-4S] cluster is required as a cofactor.

The protein localises to the cytoplasm. In terms of biological role, component of the cytosolic iron-sulfur (Fe/S) protein assembly (CIA) machinery. Required for maturation of extramitochondrial Fe-S proteins. The NUBP1-NUBP2 heterotetramer forms a Fe-S scaffold complex, mediating the de novo assembly of an Fe-S cluster and its transfer to target apoproteins. The polypeptide is Cytosolic Fe-S cluster assembly factor NUBP2 (Gallus gallus (Chicken)).